A 283-amino-acid chain; its full sequence is DNA repair protein RecO (283 aa).

It belongs to the RecO family.

Its function is as follows. Involved in DNA repair and RecF pathway recombination. The chain is DNA repair protein RecO from Gloeothece citriformis (strain PCC 7424) (Cyanothece sp. (strain PCC 7424)).